Consider the following 269-residue polypeptide: Protein OPG079 (269 aa).

It belongs to the orthopoxvirus OPG079 family. As to quaternary structure, homoomultimer (Potential). Interacts with the small subunit of ribonucleotide reductase. Interacts with host FAM111A; this interaction protomtes OPG079 degradation through autophagy.

Its subcellular location is the host cytoplasm. Functionally, plays an essential role in viral DNA replication. Binds to ssDNA with high affinity and localizes to cytoplasmic factories where nascent viral genomes accumulate. May disrupt loops, hairpins and other secondary structures present on ssDNA to reduce and eliminate pausing of viral DNA polymerase at specific sites during elongation. This Variola virus (isolate Human/India/Ind3/1967) (VARV) protein is Protein OPG079 (OPG079).